The chain runs to 562 residues: Ycf55-like protein (562 aa).

The Response regulatory domain maps to 7 to 125; it reads TIVIVDEDPV…DLVTGLKQVH (119 aa).

The protein belongs to the ycf55 family.

This chain is Ycf55-like protein, found in Synechocystis sp. (strain ATCC 27184 / PCC 6803 / Kazusa).